A 154-amino-acid chain; its full sequence is Endoribonuclease YbeY (154 aa).

Zn(2+) is bound by residues H120, H124, and H130.

The protein belongs to the endoribonuclease YbeY family. It depends on Zn(2+) as a cofactor.

The protein resides in the cytoplasm. Single strand-specific metallo-endoribonuclease involved in late-stage 70S ribosome quality control and in maturation of the 3' terminus of the 16S rRNA. The sequence is that of Endoribonuclease YbeY from Oceanobacillus iheyensis (strain DSM 14371 / CIP 107618 / JCM 11309 / KCTC 3954 / HTE831).